Here is a 410-residue protein sequence, read N- to C-terminus: F-box protein At3g61340 (410 aa).

Residues 17–66 (EEKSERIPFDLVIEILLRLPVKSIARFRYVSKLWQSTLRGQHFTESYLTI) form the F-box domain.

This Arabidopsis thaliana (Mouse-ear cress) protein is F-box protein At3g61340.